The following is a 403-amino-acid chain: Phosphoglycerate kinase (403 aa).

Substrate-binding positions include D22–N24, R37, H60–R63, R119, and R156. ATP-binding positions include K206, G302, E333, and G359–S362.

It belongs to the phosphoglycerate kinase family. In terms of assembly, monomer.

The protein localises to the cytoplasm. The catalysed reaction is (2R)-3-phosphoglycerate + ATP = (2R)-3-phospho-glyceroyl phosphate + ADP. It participates in carbohydrate degradation; glycolysis; pyruvate from D-glyceraldehyde 3-phosphate: step 2/5. The protein is Phosphoglycerate kinase (pgk) of Streptomyces coelicolor (strain ATCC BAA-471 / A3(2) / M145).